The sequence spans 528 residues: Apolipoprotein N-acyltransferase (528 aa).

5 helical membrane passes run 8-28, 69-89, 99-119, 178-198, and 203-223; these read IMLL…AVGA, AFWI…WWLG, FAWA…VFYG, VLGL…PALL, and GAKL…GYGA. The 250-residue stretch at 241-490 folds into the CN hydrolase domain; the sequence is VQPNIDQAAK…EGVENATFTL (250 aa). Glu-285 functions as the Proton acceptor in the catalytic mechanism. The active site involves Lys-349. Cys-402 (nucleophile) is an active-site residue.

This sequence belongs to the CN hydrolase family. Apolipoprotein N-acyltransferase subfamily.

The protein resides in the cell inner membrane. The enzyme catalyses N-terminal S-1,2-diacyl-sn-glyceryl-L-cysteinyl-[lipoprotein] + a glycerophospholipid = N-acyl-S-1,2-diacyl-sn-glyceryl-L-cysteinyl-[lipoprotein] + a 2-acyl-sn-glycero-3-phospholipid + H(+). It participates in protein modification; lipoprotein biosynthesis (N-acyl transfer). Functionally, catalyzes the phospholipid dependent N-acylation of the N-terminal cysteine of apolipoprotein, the last step in lipoprotein maturation. This Allorhizobium ampelinum (strain ATCC BAA-846 / DSM 112012 / S4) (Agrobacterium vitis (strain S4)) protein is Apolipoprotein N-acyltransferase.